The following is a 574-amino-acid chain: Proline--tRNA ligase (574 aa).

The protein belongs to the class-II aminoacyl-tRNA synthetase family. ProS type 1 subfamily. As to quaternary structure, homodimer.

It localises to the cytoplasm. The enzyme catalyses tRNA(Pro) + L-proline + ATP = L-prolyl-tRNA(Pro) + AMP + diphosphate. Functionally, catalyzes the attachment of proline to tRNA(Pro) in a two-step reaction: proline is first activated by ATP to form Pro-AMP and then transferred to the acceptor end of tRNA(Pro). As ProRS can inadvertently accommodate and process non-cognate amino acids such as alanine and cysteine, to avoid such errors it has two additional distinct editing activities against alanine. One activity is designated as 'pretransfer' editing and involves the tRNA(Pro)-independent hydrolysis of activated Ala-AMP. The other activity is designated 'posttransfer' editing and involves deacylation of mischarged Ala-tRNA(Pro). The misacylated Cys-tRNA(Pro) is not edited by ProRS. In Oleidesulfovibrio alaskensis (strain ATCC BAA-1058 / DSM 17464 / G20) (Desulfovibrio alaskensis), this protein is Proline--tRNA ligase.